The sequence spans 623 residues: tRNA uridine 5-carboxymethylaminomethyl modification enzyme MnmG (623 aa).

Residues 11 to 16 (GAGHAG), Val123, and Ser178 contribute to the FAD site. 270–284 (GPRYCPSIETKIVTF) serves as a coordination point for NAD(+). Residue Gln367 coordinates FAD.

Belongs to the MnmG family. In terms of assembly, homodimer. Heterotetramer of two MnmE and two MnmG subunits. Requires FAD as cofactor.

The protein localises to the cytoplasm. NAD-binding protein involved in the addition of a carboxymethylaminomethyl (cmnm) group at the wobble position (U34) of certain tRNAs, forming tRNA-cmnm(5)s(2)U34. In Phocaeicola vulgatus (strain ATCC 8482 / DSM 1447 / JCM 5826 / CCUG 4940 / NBRC 14291 / NCTC 11154) (Bacteroides vulgatus), this protein is tRNA uridine 5-carboxymethylaminomethyl modification enzyme MnmG.